The primary structure comprises 418 residues: Nickel and cobalt resistance protein CnrC (418 aa).

An N-terminal signal peptide occupies residues 1–29 (MKQVISSFLCRPRFVGSAIWLLPVALSHA).

The protein belongs to the outer membrane factor (OMF) (TC 1.B.17) family.

Functionally, the products of the genes cnrA, cnrB, and cnrC are likely to form a membrane-bound protein complex catalyzing an energy-dependent efflux of Ni(2+) and Co(2+). The mechanism of action of the CnrCBA complex may be that of a proton/cation antiporter. The chain is Nickel and cobalt resistance protein CnrC (cnrC) from Cupriavidus metallidurans (strain ATCC 43123 / DSM 2839 / NBRC 102507 / CH34) (Ralstonia metallidurans).